Reading from the N-terminus, the 488-residue chain is NADH-ubiquinone oxidoreductase chain 2 (488 aa).

The next 14 membrane-spanning stretches (helical) occupy residues 4–24 (LFLAVFPEIFIINATFILLIH), 45–65 (WLGLLSVLITLLLLAAGAPLL), 84–104 (FCQILLLLSTAGTISMCFDFF), 111–131 (AFEFIVLILLSTCSMLFMISA), 134–154 (LIAMYLAIELQSLCFYVLAAS), 168–188 (YLILGAFSSGILLFGCSMIYG), 215–235 (IFMGILFIAVGFLFKITAVPF), 252–272 (AFLSIAPKISIFANILRVFIY), 282–302 (IFFFCSIASMILGALAAMAQT), 308–328 (LAYSSIGHVGYICIGFSCGTI), 334–354 (LLIGLFIYALTTINAFAIVLA), 375–395 (ILAITFSITMFSYAGIPPLAG), 400–420 (FYLFFAALGCGAYFLASVGVV), and 456–476 (LLLAMTSSFITLFFLYPSPLF).

The protein belongs to the complex I subunit 2 family.

The protein localises to the mitochondrion inner membrane. The catalysed reaction is a ubiquinone + NADH + 5 H(+)(in) = a ubiquinol + NAD(+) + 4 H(+)(out). Functionally, core subunit of the mitochondrial membrane respiratory chain NADH dehydrogenase (Complex I) that is believed to belong to the minimal assembly required for catalysis. Complex I functions in the transfer of electrons from NADH to the respiratory chain. The immediate electron acceptor for the enzyme is believed to be ubiquinone. In Oenothera berteroana (Bertero's evening primrose), this protein is NADH-ubiquinone oxidoreductase chain 2 (ND2).